Consider the following 490-residue polypeptide: Betaine aldehyde dehydrogenase (490 aa).

Asp-93 lines the K(+) pocket. Gly-150 to Trp-152 provides a ligand contact to NAD(+). The Charge relay system role is filled by Lys-162. Lys-176–Glu-179 provides a ligand contact to NAD(+). Val-180 lines the K(+) pocket. Position 230–233 (Gly-230–Ser-233) interacts with NAD(+). Residue Leu-246 participates in K(+) binding. Glu-252 functions as the Proton acceptor in the catalytic mechanism. 3 residues coordinate NAD(+): Gly-254, Cys-286, and Glu-387. Catalysis depends on Cys-286, which acts as the Nucleophile. Position 286 is a cysteine sulfenic acid (-SOH) (Cys-286). 2 residues coordinate K(+): Lys-457 and Gly-460. Glu-464 serves as the catalytic Charge relay system.

This sequence belongs to the aldehyde dehydrogenase family. As to quaternary structure, dimer of dimers. K(+) is required as a cofactor.

It catalyses the reaction betaine aldehyde + NAD(+) + H2O = glycine betaine + NADH + 2 H(+). It participates in amine and polyamine biosynthesis; betaine biosynthesis via choline pathway; betaine from betaine aldehyde: step 1/1. In terms of biological role, involved in the biosynthesis of the osmoprotectant glycine betaine. Catalyzes the irreversible oxidation of betaine aldehyde to the corresponding acid. This Yersinia pseudotuberculosis serotype O:1b (strain IP 31758) protein is Betaine aldehyde dehydrogenase.